Here is a 268-residue protein sequence, read N- to C-terminus: Small ribosomal subunit protein eS1 (268 aa).

The tract at residues 1–21 (MAVGKNKGLSKGGKKGGKKKV) is disordered.

Belongs to the eukaryotic ribosomal protein eS1 family. Component of the small ribosomal subunit. Mature ribosomes consist of a small (40S) and a large (60S) subunit. The 40S subunit contains about 33 different proteins and 1 molecule of RNA (18S). The 60S subunit contains about 49 different proteins and 3 molecules of RNA (28S, 5.8S and 5S).

The protein resides in the cytoplasm. Functionally, essential for oogenesis; required for late follicle cell development. This is Small ribosomal subunit protein eS1 from Drosophila persimilis (Fruit fly).